Consider the following 134-residue polypeptide: MGKDTIANIITSIRNADMNRKGMVRIPATNITENIVKILLREGFIENVRKHRESNKDFWVLTLRHRRNRKGPYKTILNLKRISRPGLRIYSNYQKIPRILGGMGIVILSTSRGIMTDREARLQGIGGEILCYIW.

It belongs to the universal ribosomal protein uS8 family. In terms of assembly, part of the 30S ribosomal subunit.

It localises to the plastid. It is found in the chloroplast. Functionally, one of the primary rRNA binding proteins, it binds directly to 16S rRNA central domain where it helps coordinate assembly of the platform of the 30S subunit. This chain is Small ribosomal subunit protein uS8c (rps8), found in Cucumis sativus (Cucumber).